Here is a 387-residue protein sequence, read N- to C-terminus: Deoxyhypusine synthase (387 aa).

Residues 108–112, 134–136, E140, and D257 contribute to the NAD(+) site; these read SNLIS and SAG. Residue 139–140 coordinates spermidine; it reads EE. D262 serves as a coordination point for spermidine. G304 lines the NAD(+) pocket. Position 309 (H309) interacts with spermidine. Position 329-330 (329-330) interacts with NAD(+); it reads TG. Residues 335-337 and 344-350 each bind spermidine; these read GSD and EAVSWGK. Residue K350 is the Nucleophile of the active site. 363–364 contacts NAD(+); that stretch reads DV.

This sequence belongs to the deoxyhypusine synthase family. Homotetramer. It depends on NAD(+) as a cofactor.

The catalysed reaction is [eIF5A protein]-L-lysine + spermidine = [eIF5A protein]-deoxyhypusine + propane-1,3-diamine. The protein operates within protein modification; eIF5A hypusination. Its function is as follows. Catalyzes the NAD-dependent oxidative cleavage of spermidine and the subsequent transfer of the butylamine moiety of spermidine to the epsilon-amino group of a specific lysine residue of the eIF-5A precursor protein to form the intermediate deoxyhypusine residue. This chain is Deoxyhypusine synthase, found in Saccharomyces cerevisiae (strain ATCC 204508 / S288c) (Baker's yeast).